The chain runs to 257 residues: Acetylglutamate kinase (257 aa).

Substrate is bound by residues 43–44, R65, and N157; that span reads GG. Residues 180–185 and 208–210 each bind ATP; these read DVSGIL and IIT.

The protein belongs to the acetylglutamate kinase family. ArgB subfamily. In terms of assembly, homodimer.

Its subcellular location is the cytoplasm. It catalyses the reaction N-acetyl-L-glutamate + ATP = N-acetyl-L-glutamyl 5-phosphate + ADP. It functions in the pathway amino-acid biosynthesis; L-arginine biosynthesis; N(2)-acetyl-L-ornithine from L-glutamate: step 2/4. In terms of biological role, catalyzes the ATP-dependent phosphorylation of N-acetyl-L-glutamate. This Salmonella schwarzengrund (strain CVM19633) protein is Acetylglutamate kinase.